The primary structure comprises 1028 residues: Contactin-6 (1028 aa).

The N-terminal stretch at 1 to 19 is a signal peptide; the sequence is MRLLWKLVILLPLINSCAG. 6 Ig-like C2-type domains span residues 32-117, 122-208, 227-308, 318-402, 408-502, and 500-587; these read PQDV…AKLQ, EDFE…RSVQ, PKIE…RNLA, PEWE…AELR, PDFS…RTII, and TIIT…ERLS. Disulfide bonds link cysteine 50-cysteine 100, cysteine 144-cysteine 196, cysteine 249-cysteine 297, cysteine 339-cysteine 386, cysteine 431-cysteine 479, and cysteine 521-cysteine 577. Asparagine 65 and asparagine 193 each carry an N-linked (GlcNAc...) asparagine glycan. Residues asparagine 368, asparagine 377, and asparagine 468 are each glycosylated (N-linked (GlcNAc...) asparagine). Fibronectin type-III domains lie at 600–698, 703–800, 805–901, and 902–996; these read PPED…TKAS, APGN…SGED, APRG…TKKS, and PPSQ…KMSS. 4 N-linked (GlcNAc...) asparagine glycosylation sites follow: asparagine 659, asparagine 765, asparagine 860, and asparagine 865. At tyrosine 882 the chain carries Phosphotyrosine. 4 N-linked (GlcNAc...) asparagine glycosylation sites follow: asparagine 895, asparagine 931, asparagine 956, and asparagine 957. Serine 999 carries GPI-anchor amidated serine lipidation. Positions 1000 to 1028 are cleaved as a propeptide — removed in mature form; that stretch reads TGVQISKPSTQSLSMVGVFYCFAIHPLSR.

This sequence belongs to the immunoglobulin superfamily. Contactin family. In terms of assembly, interacts with PTPRG. In terms of tissue distribution, expressed in brain. In brain, it is preferentially expressed in the accessory olfactory bulb, layers II/III and V of the cerebral cortex, piriform cortex, anterior thalamic nuclei, locus coeruleus of the pons and mesencephalic trigeminal nucleus and in Purkinje cells of the cerebellum.

The protein resides in the cell membrane. In terms of biological role, contactins mediate cell surface interactions during nervous system development. Participates in oligodendrocytes generation by acting as a ligand of NOTCH1. Its association with NOTCH1 promotes NOTCH1 activation through the released notch intracellular domain (NICD) and subsequent translocation to the nucleus. Involved in motor coordination. The protein is Contactin-6 (Cntn6) of Mus musculus (Mouse).